The following is a 399-amino-acid chain: Ribonuclease T2-like 1-A (399 aa).

The first 17 residues, 1–17, serve as a signal peptide directing secretion; the sequence is MLSILSIAALLIATVQA. 5 disulfides stabilise this stretch: C24/C43, C32/C79, C42/C150, C87/C142, and C214/C249. Catalysis depends on residues H72, E135, and H139. Residues 259-279 are disordered; sequence KGNSGANTLTTKTTGTTTSGS. Over residues 262–279 the composition is skewed to low complexity; the sequence is SGANTLTTKTTGTTTSGS. A glycan (N-linked (GlcNAc...) asparagine) is linked at N291.

It belongs to the RNase T2 family.

The protein resides in the vacuole lumen. It localises to the cytoplasm. It carries out the reaction a ribonucleotidyl-ribonucleotide-RNA + H2O = a 3'-end 3'-phospho-ribonucleotide-RNA + a 5'-end dephospho-ribonucleoside-RNA + H(+). Functionally, rnase which modulates cell survival under stress conditions. Released from the vacuole to the cytoplasm during stress to promote tRNA and rRNA cleavage and to activate separately a downstream pathway that promotes cell death. Involved in cell size, vacuolar morphology and growth at high temperatures and high salt concentration. The chain is Ribonuclease T2-like 1-A (RNY1-A) from Candida albicans (strain SC5314 / ATCC MYA-2876) (Yeast).